A 381-amino-acid chain; its full sequence is MESGSTAASEEARSLRECELYVQKHNIQALLKDSIVQLCTARPERPMAFLREYFERLEKEEAKQIQNLQKAGTRTDSREDEISPPPPNPVVKGRRRRGAISAEVYTEEDAASYVRKVIPKDYKTMAALAKAIEKNVLFSHLDDNERSDIFDAMFSVSFIAGETVIQQGDEGDNFYVIDQGETDVYVNNEWATSVGEGGSFGELALIYGTPRAATVKAKTNVKLWGIDRDSYRRILMGSTLRKRKMYEEFLSKVSILESLDKWERLTVADALEPVQFEDGQKIVVQGEPGDEFFIILEGSAAVLQRRSENEEFVEVGRLGPSDYFGEIALLMNRPRAATVVARGPLKCVKLDRPRFERVLGPCSDILKRNIQQYNSFVSLSV.

At Met-1 the chain carries N-acetylmethionine. The interval 1 to 135 (MESGSTAASE…AALAKAIEKN (135 aa)) is dimerization and phosphorylation. Ser-3 is modified (phosphoserine). The disordered stretch occupies residues 64–96 (QIQNLQKAGTRTDSREDEISPPPPNPVVKGRRR). Thr-75 is modified (phosphothreonine). 2 positions are modified to phosphoserine: Ser-77 and Ser-83. A Pseudophosphorylation motif motif is present at residues 96–100 (RRGAI). Ser-101 is subject to Phosphoserine. 3',5'-cyclic AMP is bound by residues 137–254 (LFSH…SKVS), Glu-202, Arg-211, 255–381 (ILES…SLSV), Glu-326, and Arg-335. Ser-258 is modified (phosphoserine).

This sequence belongs to the cAMP-dependent kinase regulatory chain family. In terms of assembly, the inactive holoenzyme is composed of two regulatory chains and two catalytic chains. Activation by cAMP releases the two active catalytic monomers and the regulatory dimer. Interacts with PRKACA and PRKACB. PRKAR1A also interacts with RFC2; the complex may be involved in cell survival. Interacts with AKAP4. Interacts with RARA; the interaction occurs in the presence of cAMP or FSH and regulates RARA transcriptional activity. Interacts with the phosphorylated form of PJA2. Interacts with CBFA2T3. Interacts with PRKX; regulates this cAMP-dependent protein kinase. Interacts with smAKAP; this interaction may target PRKAR1A to the plasma membrane. Interacts with AICDA. Post-translationally, the pseudophosphorylation site binds to the substrate-binding region of the catalytic chain, resulting in the inhibition of its activity.

Its subcellular location is the cell membrane. Functionally, regulatory subunit of the cAMP-dependent protein kinases involved in cAMP signaling in cells. The protein is cAMP-dependent protein kinase type I-alpha regulatory subunit (PRKAR1A) of Pongo abelii (Sumatran orangutan).